A 193-amino-acid chain; its full sequence is Ancillary SecYEG translocon subunit (193 aa).

The Cytoplasmic segment spans residues 1–8 (MLNISKKN). The chain crosses the membrane as a helical span at residues 9-29 (IIFFILFFLIISLILFNWKYF). At 30 to 193 (SLVNKENLES…MKLNELKEQN (164 aa)) the chain is on the periplasmic side.

The protein belongs to the YfgM family. Interacts with the SecYEG translocon. Forms a complex with PpiD.

It is found in the cell inner membrane. Its function is as follows. May mediate protein transfer from the SecYEG translocon to the periplasmic chaperone network via its periplasmic C-terminal region. This chain is Ancillary SecYEG translocon subunit, found in Buchnera aphidicola subsp. Acyrthosiphon pisum (strain APS) (Acyrthosiphon pisum symbiotic bacterium).